Reading from the N-terminus, the 964-residue chain is uncharacterized protein (964 aa).

Positions 97 to 117 (DSESDVGSDAESDAESDAESD) are enriched in acidic residues. Positions 97-208 (DSESDVGSDA…SNSIDNESES (112 aa)) are disordered. The segment covering 121–148 (HTQNNTNTPINNITLINLDSSNNSTQSD) has biased composition (low complexity). Positions 149-163 (NESDNESDNESDNES) are enriched in acidic residues. Residues 192-203 (NSDNIGNSNSID) show a composition bias toward low complexity.

This is an uncharacterized protein from Acanthamoeba polyphaga (Amoeba).